Here is a 303-residue protein sequence, read N- to C-terminus: Glutamyl-Q tRNA(Asp) synthetase (303 aa).

Residues 9–13 (RFAPS) and E45 contribute to the L-glutamate site. The short motif at 12–22 (PSPTGAMHLGN) is the 'HIGH' region element. Zn(2+) contacts are provided by C100, C102, Y125, and C129. Y184 and R202 together coordinate L-glutamate. The 'KMSKS' region signature appears at 240–244 (RLAKR). K243 is an ATP binding site.

This sequence belongs to the class-I aminoacyl-tRNA synthetase family. GluQ subfamily. The cofactor is Zn(2+).

Its function is as follows. Catalyzes the tRNA-independent activation of glutamate in presence of ATP and the subsequent transfer of glutamate onto a tRNA(Asp). Glutamate is transferred on the 2-amino-5-(4,5-dihydroxy-2-cyclopenten-1-yl) moiety of the queuosine in the wobble position of the QUC anticodon. This chain is Glutamyl-Q tRNA(Asp) synthetase, found in Deinococcus geothermalis (strain DSM 11300 / CIP 105573 / AG-3a).